The primary structure comprises 170 residues: Co-chaperone protein HscB homolog (170 aa).

Positions 5–79 constitute a J domain; sequence DHFSLFGLPA…RARYLCEQAG (75 aa).

Belongs to the HscB family. In terms of assembly, interacts with HscA and stimulates its ATPase activity.

Functionally, co-chaperone involved in the maturation of iron-sulfur cluster-containing proteins. Seems to help targeting proteins to be folded toward HscA. This is Co-chaperone protein HscB homolog from Bordetella parapertussis (strain 12822 / ATCC BAA-587 / NCTC 13253).